An 83-amino-acid chain; its full sequence is Type 3 secretion system needle filament protein (83 aa).

Belongs to the SctF family. The core secretion machinery of the T3SS is composed of approximately 20 different proteins, including cytoplasmic components, a base, an export apparatus and a needle. This subunit polymerizes and forms the helical needle filament. Interacts with the needle tip protein IpaD/SctA. Interacts with the export apparatus components SpaP/SctR, SpaQ/SctS and SpaR/SctT.

Its subcellular location is the secreted. The protein resides in the cell surface. Its function is as follows. Component of the type III secretion system (T3SS), also called injectisome, which is used to inject bacterial effector proteins into eukaryotic host cells. MxiH/SctF forms the external needle filament that protrudes from the bacterial surface. In terms of biological role, during infection, can induce innate immune responses. The needle proteins interact with host TLR2 or TLR4, and induce signaling by NF-kappa-B and/or AP-1. This activation is MyD88 dependent and results in increased expression of cytokines, including TNF-alpha, IL-6 and IL-8. In Shigella flexneri, this protein is Type 3 secretion system needle filament protein.